A 180-amino-acid polypeptide reads, in one-letter code: ATP-dependent protease subunit HslV (180 aa).

Residue T8 is part of the active site. S165, C168, and T171 together coordinate Na(+).

It belongs to the peptidase T1B family. HslV subfamily. A double ring-shaped homohexamer of HslV is capped on each side by a ring-shaped HslU homohexamer. The assembly of the HslU/HslV complex is dependent on binding of ATP.

Its subcellular location is the cytoplasm. The enzyme catalyses ATP-dependent cleavage of peptide bonds with broad specificity.. With respect to regulation, allosterically activated by HslU binding. Its function is as follows. Protease subunit of a proteasome-like degradation complex believed to be a general protein degrading machinery. This Staphylococcus saprophyticus subsp. saprophyticus (strain ATCC 15305 / DSM 20229 / NCIMB 8711 / NCTC 7292 / S-41) protein is ATP-dependent protease subunit HslV.